A 172-amino-acid polypeptide reads, in one-letter code: NADH-quinone oxidoreductase subunit B (172 aa).

The [4Fe-4S] cluster site is built by cysteine 52, cysteine 53, cysteine 117, and cysteine 147.

This sequence belongs to the complex I 20 kDa subunit family. As to quaternary structure, NDH-1 is composed of 14 different subunits. Subunits NuoB, C, D, E, F, and G constitute the peripheral sector of the complex. Requires [4Fe-4S] cluster as cofactor.

The protein localises to the cell inner membrane. It carries out the reaction a quinone + NADH + 5 H(+)(in) = a quinol + NAD(+) + 4 H(+)(out). Its function is as follows. NDH-1 shuttles electrons from NADH, via FMN and iron-sulfur (Fe-S) centers, to quinones in the respiratory chain. Couples the redox reaction to proton translocation (for every two electrons transferred, four hydrogen ions are translocated across the cytoplasmic membrane), and thus conserves the redox energy in a proton gradient. The sequence is that of NADH-quinone oxidoreductase subunit B from Ehrlichia ruminantium (strain Gardel).